The primary structure comprises 460 residues: UDP-glycosyltransferase 91C1 (460 aa).

UDP-alpha-D-glucose is bound by residues Thr-283, 335–337, 352–360, and 374–377; these read VPQ, HCGWNSVVE, and LNEQ.

Belongs to the UDP-glycosyltransferase family.

This Arabidopsis thaliana (Mouse-ear cress) protein is UDP-glycosyltransferase 91C1 (UGT91C1).